We begin with the raw amino-acid sequence, 519 residues long: Probable WRKY transcription factor 33 (519 aa).

Disordered stretches follow at residues 1–34 (MAAS…STSS) and 123–212 (SSGV…CTFP). Over residues 7–34 (TMDNSRTRQNMNGSANWSQQSGRTSTSS) the composition is skewed to polar residues. Positions 130–142 (TTTTTTTTTTTTT) are enriched in low complexity. Positions 164 to 174 (TETRPNNQAVS) are enriched in polar residues. Residues 178 to 188 (REQRKGEDGYN) are compositionally biased toward basic and acidic residues. Residues 178–242 (REQRKGEDGY…YKGSHNHPKP (65 aa)) constitute a DNA-binding region (WRKY 1). Residues C209, C214, H237, and H239 each contribute to the Zn(2+) site. Disordered regions lie at residues 232 to 255 (VYKG…SSTF) and 267 to 349 (NRQA…REPR). Low complexity predominate over residues 245 to 254 (TRRSSSSSST). The span at 269-299 (QASSDQPNSNNSFHQSDSFGMQQEDNTTSDS) shows a compositional bias: polar residues. A compositionally biased stretch (basic and acidic residues) spans 323-332 (PEAKRWKGDN). Positions 356-421 (SDIDILDDGY…YEGKHNHDVP (66 aa)) form a DNA-binding region, WRKY 2. Zn(2+) is bound by residues C387, C392, H416, and H418.

It belongs to the WRKY group I family. In terms of assembly, interacts with MKS1. Interacts with ATG18A. Interacts with SIB1 and SIB2. Interacts with VQ1 and VQ10. Post-translationally, phosphorylated by MPK4. Phosphorylated on serine residues by MPK3 and MPK6 following infection with the necrotrophic fungal pathogen B.cinerea. Highly expressed in roots, leaves and flowers, and at lower levels in stems, siliques and seeds.

The protein localises to the nucleus. Functionally, transcription factor. Interacts specifically with the W box (5'-TTGAC[CT]-3'), a frequently occurring elicitor-responsive cis-acting element. Involved in defense responses. Required for resistance to the necrotrophic fungal pathogen B.cinerea. Regulates the antagonistic relationship between defense pathways mediating responses to the bacterial pathogen P. syringae and the necrotrophic pathogen B.cinerea. Required for the phytoalexin camalexin synthesis following infection with B.cinerea. Acts as a positive regulator of the camalexin biosynthetic genes PAD3 (CYP71B15) and CYP71A13 by binding to their promoters. Acts downstream of MPK3 and MPK6 in reprogramming the expression of camalexin biosynthetic genes, which drives the metabolic flow to camalexin production. Functions with WRKY25 as positive regulator of salt stress response and abscisic acid (ABA) signaling. Functions with WRKY25 and WRKY26 as positive regulator of plant thermotolerance by partially participating in ethylene-response signal transduction pathway. The DNA-binding activity of WRKY33 is increased by SIB1 and SIB2. This Arabidopsis thaliana (Mouse-ear cress) protein is Probable WRKY transcription factor 33 (WRKY33).